The sequence spans 574 residues: Septation ring formation regulator EzrA (574 aa).

At 1–7 the chain is on the extracellular side; sequence MSSGIIL. Residues 8-26 form a helical membrane-spanning segment; sequence LIVAIVLLVIIAYLIGVII. At 27–574 the chain is on the cytoplasmic side; that stretch reads RKRNDSMIGT…YERTREHIRF (548 aa). Coiled coils occupy residues 102 to 140, 243 to 379, and 459 to 520; these read NFIR…QEEK, RRLL…GQEI, and QLEA…SFEA.

Belongs to the EzrA family.

It localises to the cell membrane. In terms of biological role, negative regulator of FtsZ ring formation; modulates the frequency and position of FtsZ ring formation. Inhibits FtsZ ring formation at polar sites. Interacts either with FtsZ or with one of its binding partners to promote depolymerization. This Streptococcus uberis (strain ATCC BAA-854 / 0140J) protein is Septation ring formation regulator EzrA.